The primary structure comprises 523 residues: MFS-type transporter R5 (523 aa).

The disordered stretch occupies residues 19 to 42; it reads QLNEATAQRESATNNPNDSSSIDE. Polar residues predominate over residues 21-38; that stretch reads NEATAQRESATNNPNDSS. Residues Asn-35, Asn-94, and Asn-143 are each glycosylated (N-linked (GlcNAc...) asparagine). 2 helical membrane-spanning segments follow: residues 183–203 and 211–231; these read AYLT…GGLL and AIFW…FTFF. 2 N-linked (GlcNAc...) asparagine glycosylation sites follow: Asn-235 and Asn-250. 6 helical membrane passes run 291–311, 319–339, 381–401, 408–428, 443–463, and 470–490; these read FIVC…ISIF, YGYS…GSIL, LTIS…YGWL, VASV…VLIA, ALGA…VAAV, and IGIG…LPAL.

The protein belongs to the major facilitator superfamily.

The protein resides in the membrane. Functionally, MFS-type transporter; part of the gene cluster that mediates the biosynthesis of squalestatin S1 (SQS1, also known as zaragozic acid A), a heavily oxidized fungal polyketide that offers potent cholesterol lowering activity by targeting squalene synthase (SS). This chain is MFS-type transporter R5, found in Phoma sp. (strain ATCC 20986 / MF5453).